A 443-amino-acid chain; its full sequence is MFLAQEIIRKKRDGEPLSDEEIRFFINGVYDNTVSEGQIAALAMTIFFHDMDLQERVALTLAMRDSGHTLDWRREALGGPVVDKHSTGGVGDVTSLMLGPMIAACGGFVPMVSGRGLGHTGGTLDKLEAIPGLAIFLDDDAFRSQVKQVGVAIMGQTHSLAPADKRIYATRDITATVDSIPLITASILAKKLAEGLDALVMDVKVGSGALMPTLAGSEALAQAIVGVANGAGCRTIALLTDMNQVLASSAGNALEVREAVRFLTNDERNPRLFEVTMALCSEMLMIAGLAHSEDAARTALVRALDSGEAAERFGRMVAVQGGPADFVQRYDLYLPVATLSKPVFPAGEGYIRSMDTRALGMTVVALGGGRQRARDAIDYSVGLTEMARLGDYVDANTPLAVVHAASEESWARAAEAVRAAIQLGDVAPQALPVVYRRITAAAD.

The protein belongs to the thymidine/pyrimidine-nucleoside phosphorylase family. In terms of assembly, homodimer.

The catalysed reaction is thymidine + phosphate = 2-deoxy-alpha-D-ribose 1-phosphate + thymine. The protein operates within pyrimidine metabolism; dTMP biosynthesis via salvage pathway; dTMP from thymine: step 1/2. Functionally, the enzymes which catalyze the reversible phosphorolysis of pyrimidine nucleosides are involved in the degradation of these compounds and in their utilization as carbon and energy sources, or in the rescue of pyrimidine bases for nucleotide synthesis. The sequence is that of Thymidine phosphorylase from Sodalis glossinidius (strain morsitans).